The following is an 86-amino-acid chain: Elongation factor 1-beta (86 aa).

This sequence belongs to the EF-1-beta/EF-1-delta family.

In terms of biological role, promotes the exchange of GDP for GTP in EF-1-alpha/GDP, thus allowing the regeneration of EF-1-alpha/GTP that could then be used to form the ternary complex EF-1-alpha/GTP/AAtRNA. The protein is Elongation factor 1-beta of Methanocorpusculum labreanum (strain ATCC 43576 / DSM 4855 / Z).